The sequence spans 181 residues: Bifunctional protein PyrR (181 aa).

The short motif at 100–112 (VVLVDDVIYTGRT) is the PRPP-binding element.

This sequence belongs to the purine/pyrimidine phosphoribosyltransferase family. PyrR subfamily. As to quaternary structure, homodimer and homohexamer; in equilibrium.

It carries out the reaction UMP + diphosphate = 5-phospho-alpha-D-ribose 1-diphosphate + uracil. In terms of biological role, regulates transcriptional attenuation of the pyrimidine nucleotide (pyr) operon by binding in a uridine-dependent manner to specific sites on pyr mRNA. This disrupts an antiterminator hairpin in the RNA and favors formation of a downstream transcription terminator, leading to a reduced expression of downstream genes. Also displays a weak uracil phosphoribosyltransferase activity which is not physiologically significant. The protein is Bifunctional protein PyrR of Pelotomaculum thermopropionicum (strain DSM 13744 / JCM 10971 / SI).